A 90-amino-acid polypeptide reads, in one-letter code: Small ribosomal subunit protein bS16 (90 aa).

Belongs to the bacterial ribosomal protein bS16 family.

The polypeptide is Small ribosomal subunit protein bS16 (Lactococcus lactis subsp. cremoris (strain MG1363)).